A 151-amino-acid polypeptide reads, in one-letter code: Deoxyuridine 5'-triphosphate nucleotidohydrolase (151 aa).

Substrate is bound by residues 71–73 (RSG), N84, and 88–90 (TID).

It belongs to the dUTPase family. Mg(2+) serves as cofactor.

It catalyses the reaction dUTP + H2O = dUMP + diphosphate + H(+). It participates in pyrimidine metabolism; dUMP biosynthesis; dUMP from dCTP (dUTP route): step 2/2. Functionally, this enzyme is involved in nucleotide metabolism: it produces dUMP, the immediate precursor of thymidine nucleotides and it decreases the intracellular concentration of dUTP so that uracil cannot be incorporated into DNA. This is Deoxyuridine 5'-triphosphate nucleotidohydrolase from Gluconobacter oxydans (strain 621H) (Gluconobacter suboxydans).